A 233-amino-acid chain; its full sequence is Lipoprotein-releasing system ATP-binding protein LolD (233 aa).

An ABC transporter domain is found at 6–233 (LQCDNLCKRY…TAELSLMGAE (228 aa)). Residue 42–49 (GSSGSGKS) coordinates ATP.

It belongs to the ABC transporter superfamily. Lipoprotein translocase (TC 3.A.1.125) family. As to quaternary structure, the complex is composed of two ATP-binding proteins (LolD) and two transmembrane proteins (LolC and LolE).

It localises to the cell inner membrane. Its function is as follows. Part of the ABC transporter complex LolCDE involved in the translocation of mature outer membrane-directed lipoproteins, from the inner membrane to the periplasmic chaperone, LolA. Responsible for the formation of the LolA-lipoprotein complex in an ATP-dependent manner. This chain is Lipoprotein-releasing system ATP-binding protein LolD, found in Shigella boydii serotype 4 (strain Sb227).